The chain runs to 687 residues: Adhesion G-protein coupled receptor G1 (687 aa).

A signal peptide spans methionine 1–glycine 25. Arginine 26–arginine 33 lines the heparin pocket. The Extracellular portion of the chain corresponds to arginine 26 to tyrosine 402. Disulfide bonds link cysteine 35/cysteine 91 and cysteine 121/cysteine 177. N-linked (GlcNAc...) asparagine glycosylation is found at asparagine 39, asparagine 148, and asparagine 171. Leucine 190–proline 200 provides a ligand contact to heparin. Residues aspartate 224 to valine 395 form the GAIN-B domain. N-linked (GlcNAc...) asparagine glycans are attached at residues asparagine 234, asparagine 303, asparagine 324, and asparagine 341. Cystine bridges form between cysteine 346–cysteine 377 and cysteine 366–cysteine 379. The interval cysteine 346–valine 395 is GPS. Positions tyrosine 384 to alanine 397 are stachel. A helical membrane pass occupies residues leucine 403–alanine 423. At alanine 424–asparagine 442 the chain is on the cytoplasmic side. A helical membrane pass occupies residues leucine 443 to threonine 463. Residues glycine 464–arginine 470 lie on the Extracellular side of the membrane. A helical membrane pass occupies residues alanine 471–glycine 491. Over tyrosine 492 to lysine 512 the chain is Cytoplasmic. A helical transmembrane segment spans residues leucine 513–valine 533. Over aspartate 534–glycine 570 the chain is Extracellular. Residues leucine 571–leucine 591 traverse the membrane as a helical segment. The Cytoplasmic portion of the chain corresponds to arginine 592 to valine 603. The chain crosses the membrane as a helical span at residues leucine 604–phenylalanine 624. Residues alanine 625–glutamine 630 lie on the Extracellular side of the membrane. The helical transmembrane segment at leucine 631 to tryptophan 651 threads the bilayer. Topologically, residues tyrosine 652–isoleucine 687 are cytoplasmic. Residues serine 664–isoleucine 687 are disordered. Residues serine 678–isoleucine 687 are compositionally biased toward low complexity.

This sequence belongs to the G-protein coupled receptor 2 family. LN-TM7 subfamily. As to quaternary structure, heterodimer of 2 chains generated by proteolytic processing; the large extracellular N-terminal fragment (ADGRG1 NT) and the membrane-bound C-terminal fragment (ADGRG1-CT) predominantly remain associated and non-covalently linked. ADGRG1 NT self-associates in a trans-trans manner; the homophilic interaction enhances receptor signaling. Interacts with TGM2. Interacts with heparin; leading to the reduction of ADGRG1 shedding. Interacts with COL3A1. Part of a GPCR-tetraspanin complex at least consisting of ADGRG1, CD81, eventually CD9, and GNA11 in which CD81 is enhancing the association of ADGRG1 with GNA11. Post-translationally, autoproteolytically cleaved into 2 fragments; the large extracellular N-terminal fragment (ADGRG1 NT) and the membrane-bound C-terminal fragment (ADGRG1 CT) predominantly remain associated and non-covalently linked. Shedding to yield the secreted ADGRG1 N-terminal fragment seems to involve metalloprotease(s). In terms of processing, ubiquitinated. Undergoes polyubiquitination upon activation.

It localises to the cell membrane. Its subcellular location is the secreted. The protein resides in the membrane raft. Its activity is regulated as follows. Forms a heterodimer of 2 chains generated by proteolytic processing that remain associated through non-covalent interactions mediated by the GAIN-B domain. In the inactivated receptor, the Stachel sequence (also named stalk) is embedded in the GAIN-B domain, where it adopts a beta-strand conformation. On activation, the Stachel moves into the 7 transmembrane region and adopts a twisted hook-shaped configuration that forms contacts within the receptor, leading to coupling of a G-alpha protein, which activates signaling. The cleaved GAIN-B and N-terminal domains can then dissociate from the rest of the receptor. Its function is as follows. Adhesion G-protein coupled receptor (aGPCR) for steroid hormone 17alpha-hydroxypregnenolone (17-OH), which is involved in cell adhesion and cell-cell interactions. Ligand binding causes a conformation change that triggers signaling via guanine nucleotide-binding proteins (G proteins) and modulates the activity of downstream effectors, such as RhoA pathway. ADGRG1 is coupled to G(12) and/or G(13) G proteins (GNA12 and GNA13, respectively) and mediates the activation Rho small GTPases. Acts as a potent suppressor of ferroptosis: binding to 17-OH-binding initiates signaling that down-regulates CD36 and alleviates ferroptosis-induced liver injury. Ligand-binding also induces cell adhesion activity via association with proteins such as collagen III/COL3A1 and TGM2. Mediates cell matrix adhesion in developing neurons and hematopoietic stem cells. Involved in cortical development, specifically in maintenance of the pial basement membrane integrity and in cortical lamination: association with COL3A1 in the developing brain inhibits neuronal migration via activation of the RhoA pathway. Together with TGM2, acts as a regulator of myelination and myelin repair in oligodendrocyte precursor cells. Acts as a hemostatic sensor of shear force: G protein-coupled receptor signaling is activated in response to shear force in platelets, promoting G(13) G protein signaling, and platelet shape change and aggregation in a COL3A1-dependent manner. Acts as an inhibitor of VEGFA production thereby inhibiting angiogenesis through a signaling pathway mediated by PRKCA. Plays a role in the maintenance of hematopoietic stem cells in bone marrow niche. Plays an essential role in testis development. The protein is Adhesion G-protein coupled receptor G1 (ADGRG1) of Pan troglodytes (Chimpanzee).